Consider the following 532-residue polypeptide: Putative cysteine desulfurase PbSufS (532 aa).

An N-terminal signal peptide occupies residues 1–18 (MNNESICILLLLFVKITS). The residue at position 286 (Lys286) is an N6-(pyridoxal phosphate)lysine. The Cysteine persulfide intermediate role is filled by Cys480.

The protein belongs to the class-V pyridoxal-phosphate-dependent aminotransferase family. Csd subfamily. In terms of assembly, monomer. Interacts with SufE; interaction enhances cysteine desulfurase activity of SufS. Pyridoxal 5'-phosphate is required as a cofactor.

It is found in the plastid. The protein localises to the apicoplast. It carries out the reaction (sulfur carrier)-H + L-cysteine = (sulfur carrier)-SH + L-alanine. It functions in the pathway cofactor biosynthesis; iron-sulfur cluster biosynthesis. Its function is as follows. Catalyzes sulfur activation and mobilization in sulfur mobilization (SUF) pathway for iron-sulfur (Fe-S) cluster biogenesis. Active when in complex with a partner protein SufE. Required for apicoplast maintenance. Plays a role in the development of sporozoites in oocysts in mosquitoes. The chain is Putative cysteine desulfurase PbSufS from Plasmodium berghei (strain Anka).